A 382-amino-acid chain; its full sequence is Non-structural maintenance of chromosomes element 4 homolog A (382 aa).

The span at 1–21 shows a compositional bias: basic and acidic residues; that stretch reads MSGDSSGRRPEGRGRGRDPHR. Residues 1-80 form a disordered region; it reads MSGDSSGRRP…ASLEEETDPS (80 aa). The span at 31–41 shows a compositional bias: low complexity; that stretch reads RSPLSPGSRRG. The span at 42–55 shows a compositional bias: basic and acidic residues; the sequence is AAPERREAPERPGL. A compositionally biased stretch (acidic residues) spans 56–78; the sequence is EDTEPSDSGDEMIDPASLEEETD. Phosphothreonine is present on Thr-342. Residue Ser-374 is modified to Phosphoserine.

Belongs to the NSE4 family. Component of the SMC5-SMC6 complex which consists at least of SMC5, SMC6, NSMCE2, NSMCE1, NSMCE4A or EID3 and NSMCE3. NSMCE1, NSMCE4A or EID3 and NSMCE3 probably form a subcomplex that bridges the head domains of the SMC5:SMC6 heterodimer. Interacts with NSMCE3.

The protein resides in the nucleus. Its subcellular location is the chromosome. It localises to the telomere. Component of the SMC5-SMC6 complex, a complex involved in repair of DNA double-strand breaks by homologous recombination. The complex may promote sister chromatid homologous recombination by recruiting the SMC1-SMC3 cohesin complex to double-strand breaks. The complex is required for telomere maintenance via recombination and mediates sumoylation of shelterin complex (telosome) components. The polypeptide is Non-structural maintenance of chromosomes element 4 homolog A (NSMCE4A) (Bos taurus (Bovine)).